We begin with the raw amino-acid sequence, 946 residues long: Inter-alpha-trypsin inhibitor heavy chain H2 (946 aa).

The N-terminal stretch at 1–18 (MKRLTCFFICFFLSEVSG) is a signal peptide. Positions 19 to 54 (FEIPINGLSEFVDYEDLVELAPGKFQLVAENRRYQR) are excised as a propeptide. In terms of domain architecture, VIT spans 56–185 (LPGESEEMME…KVQFELHYQE (130 aa)). Residue S60 is modified to Phosphoserine; by FAM20C. N118 carries an N-linked (GlcNAc...) (complex) asparagine glycan. C261 and C264 are oxidised to a cystine. A 4-carboxyglutamate mark is found at E282 and E283. In terms of domain architecture, VWFA spans 308–468 (PKNILFVIDV…YDFLKRLSNE (161 aa)). A glycan (N-linked (GlcNAc...) asparagine) is linked at N445. S466 carries the post-translational modification Phosphoserine; by FAM20C. A disulfide bridge connects residues C650 and C651. Positions 665 to 679 (STPSWANPSPTPVIS) are O-glycosylated at three sites. The O-linked (GalNAc...) threonine; partial glycan is linked to T666. S673 is a glycosylation site (O-linked (GalNAc...) serine). T675 and T691 each carry an O-linked (GalNAc...) threonine glycan. D702 is subject to Aspartate 1-(chondroitin 4-sulfate)-ester. The propeptide occupies 703–946 (PHFIIYLPKS…PQLYSFLKRP (244 aa)). The residue at position 886 (S886) is a Phosphoserine; by FAM20C.

As to quaternary structure, I-alpha-I plasma protease inhibitors are assembled from one or two heavy chains (HC) and one light chain, bikunin. Inter-alpha-inhibitor (I-alpha-I) is composed of ITIH1/HC1, ITIH2/HC2 and bikunin. In terms of processing, heavy chains are linked to bikunin via chondroitin 4-sulfate esterified to the alpha-carboxyl of the C-terminal aspartate after propeptide cleavage. N- and O-glycosylated. O-glycosylated with core 1 or possibly core 8 glycans. Post-translationally, phosphorylated by FAM20C in the extracellular medium. As to expression, plasma.

The protein resides in the secreted. In terms of biological role, may act as a carrier of hyaluronan in serum or as a binding protein between hyaluronan and other matrix protein, including those on cell surfaces in tissues to regulate the localization, synthesis and degradation of hyaluronan which are essential to cells undergoing biological processes. This is Inter-alpha-trypsin inhibitor heavy chain H2 (ITIH2) from Homo sapiens (Human).